The chain runs to 530 residues: Probable NADH-specific resorcinol 4-hydroxylase (530 aa).

The enzyme catalyses resorcinol + NADH + O2 + H(+) = benzene-1,2,4-triol + NAD(+) + H2O. In terms of biological role, single-component hydroxylase that is part of the gamma-resorcylate (GRA) degradation pathway. GRA is initially converted by GRA decarboxylase to resorcinol, which is hydroxylated by resorcinol 4-hydroxylase. The sequence is that of Probable NADH-specific resorcinol 4-hydroxylase (tsdB) from Rhodococcus jostii (strain RHA1).